The following is a 296-amino-acid chain: tRNA dimethylallyltransferase (296 aa).

10–17 (GPTASGKT) contributes to the ATP binding site. 12–17 (TASGKT) contributes to the substrate binding site. The interval 35-38 (DSRQ) is interaction with substrate tRNA.

The protein belongs to the IPP transferase family. As to quaternary structure, monomer. Requires Mg(2+) as cofactor.

The enzyme catalyses adenosine(37) in tRNA + dimethylallyl diphosphate = N(6)-dimethylallyladenosine(37) in tRNA + diphosphate. In terms of biological role, catalyzes the transfer of a dimethylallyl group onto the adenine at position 37 in tRNAs that read codons beginning with uridine, leading to the formation of N6-(dimethylallyl)adenosine (i(6)A). This Synechococcus sp. (strain RCC307) protein is tRNA dimethylallyltransferase.